The primary structure comprises 324 residues: NADH-ubiquinone oxidoreductase chain 1 (324 aa).

Transmembrane regions (helical) follow at residues 9–29 (IINP…LTLL), 43–63 (PNIV…KLFI), 75–95 (FLFL…WAPM), 106–126 (LGVL…LGSG), 146–166 (ISYE…TGGF), 177–197 (SIWL…STLA), 237–257 (ILLM…IPAF), 259–279 (ELTA…FLWV), and 299–319 (FLPL…AMAG).

The protein belongs to the complex I subunit 1 family.

It is found in the mitochondrion inner membrane. The enzyme catalyses a ubiquinone + NADH + 5 H(+)(in) = a ubiquinol + NAD(+) + 4 H(+)(out). Functionally, core subunit of the mitochondrial membrane respiratory chain NADH dehydrogenase (Complex I) that is believed to belong to the minimal assembly required for catalysis. Complex I functions in the transfer of electrons from NADH to the respiratory chain. The immediate electron acceptor for the enzyme is believed to be ubiquinone. This is NADH-ubiquinone oxidoreductase chain 1 (MT-ND1) from Salmo salar (Atlantic salmon).